The following is an 82-amino-acid chain: Putative defensin-like protein 48 (82 aa).

A signal peptide spans 1-28; it reads MGIKTLIIFFHIFILAVLSSNNIILTSG. 4 disulfide bridges follow: C39–C80, C43–C67, C53–C78, and C57–C79.

This sequence belongs to the DEFL family.

It localises to the secreted. The chain is Putative defensin-like protein 48 from Arabidopsis thaliana (Mouse-ear cress).